Consider the following 229-residue polypeptide: Pyridoxal phosphate homeostasis protein (229 aa).

Lys-36 bears the N6-(pyridoxal phosphate)lysine mark.

It belongs to the pyridoxal phosphate-binding protein YggS/PROSC family. As to quaternary structure, monomer.

Pyridoxal 5'-phosphate (PLP)-binding protein, which is involved in PLP homeostasis. The sequence is that of Pyridoxal phosphate homeostasis protein from Buchnera aphidicola subsp. Schizaphis graminum (strain Sg).